The primary structure comprises 392 residues: Chaperone protein DnaJ (392 aa).

The 66-residue stretch at 2–67 folds into the J domain; sequence DYYTILGVAK…QKRESYDRYG (66 aa). A CR-type zinc finger spans residues 149-227; sequence GVEKELLVSG…CRGQGRIKDK (79 aa). 8 residues coordinate Zn(2+): cysteine 162, cysteine 165, cysteine 179, cysteine 182, cysteine 201, cysteine 204, cysteine 215, and cysteine 218. CXXCXGXG motif repeat units follow at residues 162-169, 179-186, 201-208, and 215-222; these read CDACSGSG, CDRCKGSG, CPDCSGEG, and CSECRGQG.

The protein belongs to the DnaJ family. As to quaternary structure, homodimer. Zn(2+) is required as a cofactor.

It is found in the cytoplasm. Participates actively in the response to hyperosmotic and heat shock by preventing the aggregation of stress-denatured proteins and by disaggregating proteins, also in an autonomous, DnaK-independent fashion. Unfolded proteins bind initially to DnaJ; upon interaction with the DnaJ-bound protein, DnaK hydrolyzes its bound ATP, resulting in the formation of a stable complex. GrpE releases ADP from DnaK; ATP binding to DnaK triggers the release of the substrate protein, thus completing the reaction cycle. Several rounds of ATP-dependent interactions between DnaJ, DnaK and GrpE are required for fully efficient folding. Also involved, together with DnaK and GrpE, in the DNA replication of plasmids through activation of initiation proteins. In Chlamydia muridarum (strain MoPn / Nigg), this protein is Chaperone protein DnaJ.